The sequence spans 290 residues: 4-hydroxy-tetrahydrodipicolinate synthase (290 aa).

T44 contacts pyruvate. The Proton donor/acceptor role is filled by Y132. Catalysis depends on K160, which acts as the Schiff-base intermediate with substrate. I202 is a pyruvate binding site.

The protein belongs to the DapA family. As to quaternary structure, homotetramer; dimer of dimers.

It is found in the cytoplasm. The enzyme catalyses L-aspartate 4-semialdehyde + pyruvate = (2S,4S)-4-hydroxy-2,3,4,5-tetrahydrodipicolinate + H2O + H(+). It functions in the pathway amino-acid biosynthesis; L-lysine biosynthesis via DAP pathway; (S)-tetrahydrodipicolinate from L-aspartate: step 3/4. Its function is as follows. Catalyzes the condensation of (S)-aspartate-beta-semialdehyde [(S)-ASA] and pyruvate to 4-hydroxy-tetrahydrodipicolinate (HTPA). This Citrifermentans bemidjiense (strain ATCC BAA-1014 / DSM 16622 / JCM 12645 / Bem) (Geobacter bemidjiensis) protein is 4-hydroxy-tetrahydrodipicolinate synthase.